A 598-amino-acid chain; its full sequence is UvrABC system protein C (598 aa).

In terms of domain architecture, GIY-YIG spans 14-91; sequence DSPGCYLHKD…IQKNMPKYNI (78 aa). Positions 196–231 constitute a UVR domain; it reads DKIIEDLRSKMLAASEEMAFERAAEYRDLISGIATM.

The protein belongs to the UvrC family. Interacts with UvrB in an incision complex.

It is found in the cytoplasm. Its function is as follows. The UvrABC repair system catalyzes the recognition and processing of DNA lesions. UvrC both incises the 5' and 3' sides of the lesion. The N-terminal half is responsible for the 3' incision and the C-terminal half is responsible for the 5' incision. This Streptococcus pyogenes serotype M28 (strain MGAS6180) protein is UvrABC system protein C.